The sequence spans 419 residues: MKFVIKSISKNSGRLGQLRIGKESNELQTPLLMQTTKGGSIPYLSGDVFDSVCKGQQQQQLLQLTLSTMDQMAESLVQWNRSLSEYVGLPGHATVLLLRDPCETTPAGGNDRDVVPLFTRRGKESLTATRYLELVSSFAPDVYQGLCDADTNPDSTKKRVQKSVDRTERFMEQCYERRVENSTLLAPIVGGYNTFARTQSIKHARQQPAGSYGGYILEGFHSNGLAATELKATQLLPIVEHCVQQLEEEQPRLMPGAYTPLLMLELIRQGIDIFDTSYAYCAAVNYKALSFSYKLDEIRPDDEHTPLLDMTAEEYKEQFKPLLSGCTCLACEKHTRAYHHHLYKTHELLGPILLMIHNLHHLMGFFDVIRASIGTDQLPALLEHLRMQNTSTEINYRIEPNNKIVTKAAMGKGFIAPAV.

The Zn(2+) site is built by Cys-326, Cys-328, Cys-331, and His-357.

The protein belongs to the queuine tRNA-ribosyltransferase family. QTRT2 subfamily. In terms of assembly, heterodimer of a catalytic subunit and an accessory subunit. Requires Zn(2+) as cofactor.

The protein resides in the cytoplasm. Functionally, non-catalytic subunit of the queuine tRNA-ribosyltransferase (TGT) that catalyzes the base-exchange of a guanine (G) residue with queuine (Q) at position 34 (anticodon wobble position) in tRNAs with GU(N) anticodons (tRNA-Asp, -Asn, -His and -Tyr), resulting in the hypermodified nucleoside queuosine (7-(((4,5-cis-dihydroxy-2-cyclopenten-1-yl)amino)methyl)-7-deazaguanosine). This is Queuine tRNA-ribosyltransferase accessory subunit 2 from Drosophila grimshawi (Hawaiian fruit fly).